The primary structure comprises 343 residues: Probable dolichyl-diphosphooligosaccharide--protein glycosyltransferase subunit 3A (343 aa).

The N-terminal stretch at 1–22 (MVIQTNLSYRFFILIVFLFTLA) is a signal peptide. Topologically, residues 23-185 (NPKSDSDLKN…TVCSIQRPPL (163 aa)) are lumenal. N-linked (GlcNAc...) asparagine glycans are attached at residues Asn-105, Asn-108, and Asn-146. The chain crosses the membrane as a helical span at residues 186–206 (ISKTQIGIIVAIIIISTPILI). Residues 207-220 (KKILKGETLLHDHR) are Cytoplasmic-facing. Residues 221–241 (IWLVGAVFVYFFSVSGTMHNI) traverse the membrane as a helical segment. The Lumenal portion of the chain corresponds to 242-273 (IREMPMYIKDYEDSSKFVFFIEESEMQLGAEG). Residues 274 to 294 (FFVGFLYTVVGLLLAFVTNVV) traverse the membrane as a helical segment. The Cytoplasmic segment spans residues 295–304 (VRVKKLDEQR). A helical transmembrane segment spans residues 305 to 325 (MAMLLALSISFWAVRKVVYLD). The Lumenal portion of the chain corresponds to 326–343 (NWKTGYEIYPYWPSSWRG).

This sequence belongs to the OST3/OST6 family. In terms of assembly, component of the oligosaccharyltransferase (OST) complex.

It is found in the endoplasmic reticulum membrane. Functionally, subunit of the oligosaccharyl transferase (OST) complex that catalyzes the initial transfer of a defined glycan (Glc(3)Man(9)GlcNAc(2) in eukaryotes) from the lipid carrier dolichol-pyrophosphate to an asparagine residue within an Asn-X-Ser/Thr consensus motif in nascent polypeptide chains, the first step in protein N-glycosylation. N-glycosylation occurs cotranslationally and the complex associates with the Sec61 complex at the channel-forming translocon complex that mediates protein translocation across the endoplasmic reticulum (ER). All subunits are required for a maximal enzyme activity. This Arabidopsis thaliana (Mouse-ear cress) protein is Probable dolichyl-diphosphooligosaccharide--protein glycosyltransferase subunit 3A (OST3A).